A 360-amino-acid chain; its full sequence is Probable dual-specificity RNA methyltransferase RlmN (360 aa).

The active-site Proton acceptor is the Glu-91. Residues 97-335 enclose the Radical SAM core domain; sequence QHYGQSVCVT…CVVRQEHGTD (239 aa). A disulfide bond links Cys-104 and Cys-340. The [4Fe-4S] cluster site is built by Cys-111, Cys-115, and Cys-118. S-adenosyl-L-methionine-binding positions include 163-164, Ser-195, 218-220, and Asn-296; these read GE and SLH. The active-site S-methylcysteine intermediate is the Cys-340.

This sequence belongs to the radical SAM superfamily. RlmN family. Requires [4Fe-4S] cluster as cofactor.

It is found in the cytoplasm. It carries out the reaction adenosine(2503) in 23S rRNA + 2 reduced [2Fe-2S]-[ferredoxin] + 2 S-adenosyl-L-methionine = 2-methyladenosine(2503) in 23S rRNA + 5'-deoxyadenosine + L-methionine + 2 oxidized [2Fe-2S]-[ferredoxin] + S-adenosyl-L-homocysteine. The catalysed reaction is adenosine(37) in tRNA + 2 reduced [2Fe-2S]-[ferredoxin] + 2 S-adenosyl-L-methionine = 2-methyladenosine(37) in tRNA + 5'-deoxyadenosine + L-methionine + 2 oxidized [2Fe-2S]-[ferredoxin] + S-adenosyl-L-homocysteine. Its function is as follows. Specifically methylates position 2 of adenine 2503 in 23S rRNA and position 2 of adenine 37 in tRNAs. The polypeptide is Probable dual-specificity RNA methyltransferase RlmN (Streptococcus equi subsp. zooepidemicus (strain H70)).